The following is a 347-amino-acid chain: Gamma-glutamyl hydrolase 2 (347 aa).

The first 22 residues, 1–22 (MWSYVWLPLVALSLFKDSIIMA), serve as a signal peptide directing secretion. The region spanning 45–341 (APDPNLNYRP…IGYDEVYIFT (297 aa)) is the Gamma-glutamyl hydrolase domain. The Nucleophile role is filled by C155. The active-site Proton donor is H268.

The protein belongs to the peptidase C26 family. As to expression, expressed in roots, in leaves, stems and siliques.

It localises to the vacuole. Its subcellular location is the secreted. It is found in the extracellular space. The protein localises to the cell wall. The catalysed reaction is (6S)-5,6,7,8-tetrahydrofolyl-(gamma-L-Glu)(n) + (n-1) H2O = (6S)-5,6,7,8-tetrahydrofolate + (n-1) L-glutamate. Its function is as follows. Cleaves the polyglutamate sidechains of folate polyglutamates in the vacuole. Is important for polyglutamyl tail length determination before vacuolar exit. Plays a role on folate stability and intracellular folate content. Has endopeptidase activity against 4-amino-10-methylpteroyl penta-, tetra-, tri- and di-gamma-L-glutamate substrates and is responsible for the production of folic acid, also called pteroylglutamic acid (PteGlu) from teroylpolyglutamates. The protein is Gamma-glutamyl hydrolase 2 (GGH2) of Arabidopsis thaliana (Mouse-ear cress).